The following is a 199-amino-acid chain: Imidazoleglycerol-phosphate dehydratase (199 aa).

It belongs to the imidazoleglycerol-phosphate dehydratase family.

It is found in the cytoplasm. It catalyses the reaction D-erythro-1-(imidazol-4-yl)glycerol 3-phosphate = 3-(imidazol-4-yl)-2-oxopropyl phosphate + H2O. It functions in the pathway amino-acid biosynthesis; L-histidine biosynthesis; L-histidine from 5-phospho-alpha-D-ribose 1-diphosphate: step 6/9. The sequence is that of Imidazoleglycerol-phosphate dehydratase from Lactococcus lactis subsp. cremoris (strain MG1363).